Here is a 624-residue protein sequence, read N- to C-terminus: Forkhead box protein O1 (624 aa).

2 disordered regions span residues 1 to 62 and 94 to 128; these read MAEA…PSAS and APLS…SRRN. The residue at position 24 (T24) is a Phosphothreonine; by PKB/AKT1 or PKB/AKT2 and SGK1. Low complexity-rich tracts occupy residues 37–62 and 105–119; these read SATS…PSAS and AAAA…AGQP. The fork-head DNA-binding region spans 130–224; it reads WGNLSYADLI…KSGKSPRRRA (95 aa). DNA-binding regions lie at residues 181-188 and 204-207; these read NSIRHNLS and SSWW. Phosphoserine; by STK4/MST1 is present on S182. S188, S204, and S205 each carry phosphoserine. Positions 204-306 are disordered; sequence SSWWMLNPEG…RLSPIMTEQD (103 aa). K215 and K218 each carry N6-acetyllysine. S219 carries the post-translational modification Phosphoserine; by CDK1. Omega-N-methylarginine; by PRMT1 occurs at positions 221 and 223. The Nuclear localization signal motif lies at 221 to 223; it reads RRR. The residue at position 226 (S226) is a Phosphoserine; by PKB/AKT1 and SGK1. An N6-acetyllysine mark is found at K232, K235, and K244. Residues 234–245 show a composition bias toward basic residues; it reads AKSRGRAAKKKA. Residues 253 to 532 are sufficient for interaction with NLK; it reads GAGDSPGSQF…RLAPVKTALQ (280 aa). 2 positions are modified to phosphoserine: S257 and S268. Over residues 279–296 the composition is skewed to polar residues; it reads NWSTFRPRTSSNASTISG. S289 carries the phosphoserine; by PKB/AKT1 modification. S292 is subject to Phosphoserine; by CK1 and SGK1. Position 295 is a phosphoserine; by CK1 (S295). S299 bears the Phosphoserine; by DYRK1A mark. Position 303 is a phosphothreonine (T303). A required for interaction with RUNX2 region spans residues 333–428; sequence SEISNPENME…YGGMSQYCAP (96 aa). K393 bears the N6-acetyllysine mark. The short motif at 431-435 is the Required for interaction with SIRT1 element; sequence LKELL.

In terms of assembly, interacts with LRPPRC. Interacts with RUNX2; the interaction inhibits RUNX2 transcriptional activity and mediates the IGF1/insulin-dependent BGLAP expression in osteoblasts Interacts with PPP2R1A; the interaction regulates the dephosphorylation of FOXO1 at Thr-24 and Ser-263 leading to its nuclear import. Interacts with NLK. Interacts with SIRT1; the interaction results in the deacetylation of FOXO1 leading to activation of FOXO1-mediated transcription of genes involved in DNA repair and stress resistance. Binds to CDK1. Interacts with the 14-3-3 proteins, YWHAG and YWHAZ; the interactions require insulin-stimulated phosphorylation on Thr-24, promote nuclear exit and loss of transcriptional activity. Interacts with SKP2; the interaction ubiquitinates FOXO1 leading to its proteasomal degradation. The interaction requires the presence of KRIT1. Interacts (via the C-terminal half) with ATF4 (via its DNA binding domain); the interaction occurs in osteoblasts, regulates glucose homeostasis via suppression of beta-cell proliferation and subsequent decrease in insulin production. Interacts with PRMT1; the interaction methylates FOXO1, prevents PKB/AKT1 phosphorylation and retains FOXO1 in the nucleus. Interacts with EP300 and CREBBP; the interactions acetylate FOXO1. Interacts with SIRT2; the interaction is disrupted in response to oxidative stress or serum deprivation, leading to increased level of acetylated FOXO1, which promotes stress-induced autophagy by stimulating E1-like activating enzyme ATG7. Interacts (acetylated form) with ATG7; the interaction is increased in response to oxidative stress or serum deprivation and promotes the autophagic process leading to cell death. Interacts (acetylated form) with PPARG. Interacts with XBP1; this interaction is direct and leads to FOXO1 ubiquitination and degradation via the proteasome pathway. Interacts (via the Fork-head domain) with CEBPA; the interaction increases when FOXO1 is deacetylated. Interacts with WDFY2. Forms a complex with WDFY2 and AKT1. Interacts with CRY1. Interacts with PPIA/CYPA; the interaction promotes FOXO1 dephosphorylation, nuclear accumulation and transcriptional activity. Interacts with TOX4; FOXO1 is required for full induction of TOX4-dependent activity and the interaction is inhibited by insulin. Interacts (when phosphorylated on Ser-226) with STUB1/CHIP. In terms of processing, phosphorylation by NLK promotes nuclear export and inhibits the transcriptional activity. In response to growth factors, phosphorylation on Thr-24, Ser-226 and Ser-292 by PKB/AKT1 promotes nuclear export and inactivation of transactivational activity. Phosphorylation on Thr-24 is required for binding 14-3-3 proteins. Phosphorylation of Ser-226 decreases DNA-binding activity and promotes the phosphorylation of Thr-24 and Ser-289, permitting phosphorylation of Ser-292 and Ser-295, probably by CDK1, leading to nuclear exclusion and loss of function. Stress signals, such as response to oxygen or nitric oxide, attenuate the PKB/AKT1-mediated phosphorylation leading to nuclear retention. Phosphorylation of Ser-299 is independent of IGF1 and leads to reduced function. Dephosphorylated on Thr-24 and Ser-226 by PP2A in beta-cells under oxidative stress leading to nuclear retention. Phosphorylation of Ser-219 by CDK1 disrupts binding of 14-3-3 proteins leading to nuclear accumulation and has no effect on DNA binding nor transcriptional activity. Phosphorylation by STK4/MST1 on Ser-182, upon oxidative stress, inhibits binding to 14-3-3 proteins and nuclear export. PPIA/CYPA promotes its dephosphorylation on Ser-226. Post-translationally, ubiquitinated by SKP2. Ubiquitination leads to proteasomal degradation. Ubiquitinated by STUB1/CHIP; when Ser-226 is phosphorylated. Methylation inhibits AKT1-mediated phosphorylation at Ser-226 and is increased by oxidative stress. In terms of processing, acetylated. Acetylation at Lys-232 and Lys-244 are necessary for autophagic cell death induction. Deacetylated by SIRT2 in response to oxidative stress or serum deprivation, thereby negatively regulating FOXO1-mediated autophagic cell death. Once in the nucleus, acetylated by CREBBP/EP300. Acetylation diminishes the interaction with target DNA and attenuates the transcriptional activity. It increases the phosphorylation at Ser-226. Deacetylation by SIRT1 results in reactivation of the transcriptional activity. Oxidative stress by hydrogen peroxide treatment appears to promote deacetylation and uncoupling of insulin-induced phosphorylation. By contrast, resveratrol acts independently of acetylation. Acetylated at Lys-393, promoting its localization to the nucleus and transcription factor activity. Deacetylation at Lys-393 by SIRT6, promotes its translocation into the cytoplasm, preventing its transcription factor activity. Deacetylation and subsequent inhibition by SIRT6 has different effects depending on cell types: it inhibits gluconeogenesis in hepatocytes, promotes glucose sensing in pancreatic beta-cells and regulates lipid catabolism in brown adipocytes.

It is found in the cytoplasm. It localises to the nucleus. Its function is as follows. Transcription factor that is the main target of insulin signaling and regulates metabolic homeostasis in response to oxidative stress. Binds to the insulin response element (IRE) with consensus sequence 5'-TT[G/A]TTTTG-3' and the related Daf-16 family binding element (DBE) with consensus sequence 5'-TT[G/A]TTTAC-3'. Activity suppressed by insulin. Main regulator of redox balance and osteoblast numbers and controls bone mass. Orchestrates the endocrine function of the skeleton in regulating glucose metabolism. Also acts as a key regulator of chondrogenic commitment of skeletal progenitor cells in response to lipid availability: when lipids levels are low, translocates to the nucleus and promotes expression of SOX9, which induces chondrogenic commitment and suppresses fatty acid oxidation. Acts synergistically with ATF4 to suppress osteocalcin/BGLAP activity, increasing glucose levels and triggering glucose intolerance and insulin insensitivity. Also suppresses the transcriptional activity of RUNX2, an upstream activator of osteocalcin/BGLAP. Acts as an inhibitor of glucose sensing in pancreatic beta cells by acting as a transcription repressor and suppressing expression of PDX1. In hepatocytes, promotes gluconeogenesis by acting together with PPARGC1A and CEBPA to activate the expression of genes such as IGFBP1, G6PC1 and PCK1. Also promotes gluconeogenesis by directly promoting expression of PPARGC1A and G6PC1. Important regulator of cell death acting downstream of CDK1, PKB/AKT1 and STK4/MST1. Promotes neural cell death. Mediates insulin action on adipose tissue. Regulates the expression of adipogenic genes such as PPARG during preadipocyte differentiation and, adipocyte size and adipose tissue-specific gene expression in response to excessive calorie intake. Regulates the transcriptional activity of GADD45A and repair of nitric oxide-damaged DNA in beta-cells. Required for the autophagic cell death induction in response to starvation or oxidative stress in a transcription-independent manner. Mediates the function of MLIP in cardiomyocytes hypertrophy and cardiac remodeling. Positive regulator of apoptosis in cardiac smooth muscle cells as a result of its transcriptional activation of pro-apoptotic genes. Regulates endothelial cell (EC) viability and apoptosis in a PPIA/CYPA-dependent manner via transcription of CCL2 and BCL2L11 which are involved in EC chemotaxis and apoptosis. The polypeptide is Forkhead box protein O1 (FOXO1) (Bos taurus (Bovine)).